The following is a 216-amino-acid chain: Small ribosomal subunit protein uS2 (216 aa).

It belongs to the universal ribosomal protein uS2 family.

In Carsonella ruddii (strain PV), this protein is Small ribosomal subunit protein uS2.